A 660-amino-acid chain; its full sequence is MKTVVFAYHDMGCLGIEALLAAGYEISAIFTHTDNPAEKAFYGSVARLAAERGIPVYAPDNVNHPLWVERIAQLSPEVIFSFYYRHLICDEILQLAPAGAFNLHGSLLPKYRGRAPLNWVLVNGETETGVTLHRMVKRADAGAIVAQLRVAIAPDDIAITLHHKLCHAARQLLEQTLPAIKHGNILEIAQRENEATCFGHRTPDDSFLEWHKPASVLHNMVRAVADPWPGAFSYVGNQKFTVWSSRVHPHASKAQPGSVISVAPLLIACGDGALEIVTGQAGDGITMQGSQLAQMLGLVQGSRLNSQPACTARRRTRVLILGVNGFIGNHLTERLLREDHYEVYGLDIGSDAISRFLNHPHFHFVEGDISIHSEWIEYHVKKCDVVLPLVAIATPIEYTRNPLRVFELDFEENLRIIRYCVKYRKRIIFPSTSEVYGMCSDKYFDEDHSNLIVGPVNKPRWIYSVSKQLLDRVIWAYGEKEGLQFTLFRPFNWMGPRLDNLNAARIGSSRAITQLILNLVEGSPIKLIDGGKQKRCFTDIRDGIEALYRIIENAGNRCDGEIINIGNPENEASIEELGEMLLASFEKHPLRHHFPPFAGFRVVESSSYYGKGYQDVEHRKPSIRNARRCLDWEPKIDMQETIDETLDFFLRTVDLTDKPS.

The segment at 1–304 is formyltransferase ArnAFT; it reads MKTVVFAYHD…MLGLVQGSRL (304 aa). 86–88 lines the (6R)-10-formyltetrahydrofolate pocket; sequence HLI. The Proton donor; for formyltransferase activity role is filled by His-104. Residues Arg-114 and 136–140 each bind (6R)-10-formyltetrahydrofolate; that span reads VKRAD. The segment at 314–660 is dehydrogenase ArnADH; it reads RRTRVLILGV…RTVDLTDKPS (347 aa). NAD(+) is bound by residues Asp-347 and 368–369; that span reads DI. UDP-alpha-D-glucuronate contacts are provided by residues Ala-393, Tyr-398, and 432 to 433; that span reads TS. The active-site Proton acceptor; for decarboxylase activity is Glu-434. Residues Arg-460, Asn-492, 526 to 535, and Tyr-613 each bind UDP-alpha-D-glucuronate; that span reads KLIDGGKQKR. Arg-619 acts as the Proton donor; for decarboxylase activity in catalysis.

The protein in the N-terminal section; belongs to the Fmt family. UDP-L-Ara4N formyltransferase subfamily. This sequence in the C-terminal section; belongs to the NAD(P)-dependent epimerase/dehydratase family. UDP-glucuronic acid decarboxylase subfamily. Homohexamer, formed by a dimer of trimers.

It carries out the reaction UDP-alpha-D-glucuronate + NAD(+) = UDP-beta-L-threo-pentopyranos-4-ulose + CO2 + NADH. It catalyses the reaction UDP-4-amino-4-deoxy-beta-L-arabinose + (6R)-10-formyltetrahydrofolate = UDP-4-deoxy-4-formamido-beta-L-arabinose + (6S)-5,6,7,8-tetrahydrofolate + H(+). Its pathway is nucleotide-sugar biosynthesis; UDP-4-deoxy-4-formamido-beta-L-arabinose biosynthesis; UDP-4-deoxy-4-formamido-beta-L-arabinose from UDP-alpha-D-glucuronate: step 1/3. It functions in the pathway nucleotide-sugar biosynthesis; UDP-4-deoxy-4-formamido-beta-L-arabinose biosynthesis; UDP-4-deoxy-4-formamido-beta-L-arabinose from UDP-alpha-D-glucuronate: step 3/3. It participates in bacterial outer membrane biogenesis; lipopolysaccharide biosynthesis. Functionally, bifunctional enzyme that catalyzes the oxidative decarboxylation of UDP-glucuronic acid (UDP-GlcUA) to UDP-4-keto-arabinose (UDP-Ara4O) and the addition of a formyl group to UDP-4-amino-4-deoxy-L-arabinose (UDP-L-Ara4N) to form UDP-L-4-formamido-arabinose (UDP-L-Ara4FN). The modified arabinose is attached to lipid A and is required for resistance to polymyxin and cationic antimicrobial peptides. In Shigella sonnei (strain Ss046), this protein is Bifunctional polymyxin resistance protein ArnA.